A 210-amino-acid polypeptide reads, in one-letter code: 23.5 kDa heat shock protein, mitochondrial (210 aa).

Residues 1 to 20 (MASSSALALRRLLSSSTVAV) constitute a mitochondrion transit peptide. A sHSP domain is found at 102–210 (MGASGVRRGW…RNNIRHINVD (109 aa)).

This sequence belongs to the small heat shock protein (HSP20) family. May form oligomeric structures.

The protein resides in the mitochondrion. The protein is 23.5 kDa heat shock protein, mitochondrial (HSP23.5) of Arabidopsis thaliana (Mouse-ear cress).